The chain runs to 305 residues: GMP synthase [glutamine-hydrolyzing] subunit B (305 aa).

The GMPS ATP-PPase domain maps to 2–184; that stretch reads VNIEKFIDQA…LGLPAEIQHR (183 aa). Residue 29–35 coordinates ATP; the sequence is SGGVDSS.

In terms of assembly, heterodimer composed of a glutamine amidotransferase subunit (A) and a GMP-binding subunit (B).

The catalysed reaction is XMP + L-glutamine + ATP + H2O = GMP + L-glutamate + AMP + diphosphate + 2 H(+). Its pathway is purine metabolism; GMP biosynthesis; GMP from XMP (L-Gln route): step 1/1. Catalyzes the synthesis of GMP from XMP. The sequence is that of GMP synthase [glutamine-hydrolyzing] subunit B from Methanoculleus marisnigri (strain ATCC 35101 / DSM 1498 / JR1).